Reading from the N-terminus, the 95-residue chain is Protein TusB (95 aa).

The protein belongs to the DsrH/TusB family. As to quaternary structure, heterohexamer, formed by a dimer of trimers. The hexameric TusBCD complex contains 2 copies each of TusB, TusC and TusD. The TusBCD complex interacts with TusE.

Its subcellular location is the cytoplasm. Functionally, part of a sulfur-relay system required for 2-thiolation of 5-methylaminomethyl-2-thiouridine (mnm(5)s(2)U) at tRNA wobble positions. The chain is Protein TusB from Escherichia coli (strain K12 / MC4100 / BW2952).